Consider the following 281-residue polypeptide: NADPH-dependent 7-cyano-7-deazaguanine reductase (281 aa).

81 to 83 (VES) contacts substrate. 83-84 (SK) lines the NADPH pocket. Cysteine 188 acts as the Thioimide intermediate in catalysis. Catalysis depends on aspartate 195, which acts as the Proton donor. 227 to 228 (HE) is a substrate binding site. 256–257 (RG) provides a ligand contact to NADPH. The disordered stretch occupies residues 261 to 281 (INPLRTSHPQGLPRNMRTARQ).

It belongs to the GTP cyclohydrolase I family. QueF type 2 subfamily. As to quaternary structure, homodimer.

It localises to the cytoplasm. It catalyses the reaction 7-aminomethyl-7-carbaguanine + 2 NADP(+) = 7-cyano-7-deazaguanine + 2 NADPH + 3 H(+). It functions in the pathway tRNA modification; tRNA-queuosine biosynthesis. Functionally, catalyzes the NADPH-dependent reduction of 7-cyano-7-deazaguanine (preQ0) to 7-aminomethyl-7-deazaguanine (preQ1). The chain is NADPH-dependent 7-cyano-7-deazaguanine reductase from Verminephrobacter eiseniae (strain EF01-2).